The chain runs to 151 residues: Large ribosomal subunit protein bL9 (151 aa).

Belongs to the bacterial ribosomal protein bL9 family.

Binds to the 23S rRNA. The protein is Large ribosomal subunit protein bL9 of Bordetella bronchiseptica (strain ATCC BAA-588 / NCTC 13252 / RB50) (Alcaligenes bronchisepticus).